We begin with the raw amino-acid sequence, 146 residues long: Hemoglobin subunit beta (146 aa).

V1 is modified (N-acetylvaline). Residues 2 to 146 (HLTDAEKALV…VATALAHKYH (145 aa)) enclose the Globin domain. Position 12 is a phosphothreonine (T12). A Phosphoserine modification is found at S44. K59 bears the N6-acetyllysine mark. Position 63 (H63) interacts with heme b. K82 is subject to N6-acetyllysine. H92 is a binding site for heme b. S-nitrosocysteine is present on C93. K144 is modified (N6-acetyllysine).

It belongs to the globin family. In terms of assembly, heterotetramer of two alpha chains and two beta chains. In terms of tissue distribution, red blood cells.

Involved in oxygen transport from the lung to the various peripheral tissues. The chain is Hemoglobin subunit beta from Peromyscus crinitus (Canyon mouse).